The chain runs to 161 residues: Troponin C, slow skeletal and cardiac muscles (161 aa).

Position 1 is an N-acetylmethionine (methionine 1). 4 consecutive EF-hand domains span residues 16 to 51, 52 to 87, 92 to 127, and 128 to 161; these read QKNE…LGQN, PTPE…CMKD, KTEE…TGET, and ITED…KGVE. Ca(2+) is bound by residues aspartate 65, aspartate 67, serine 69, threonine 71, aspartate 105, asparagine 107, aspartate 109, tyrosine 111, glutamate 116, asparagine 143, aspartate 145, arginine 147, and glutamate 152.

This sequence belongs to the troponin C family.

Its function is as follows. Troponin is the central regulatory protein of striated muscle contraction. Tn consists of three components: Tn-I which is the inhibitor of actomyosin ATPase, Tn-T which contains the binding site for tropomyosin and Tn-C. The binding of calcium to Tn-C abolishes the inhibitory action of Tn on actin filaments. The sequence is that of Troponin C, slow skeletal and cardiac muscles (TNNC1) from Coturnix japonica (Japanese quail).